Reading from the N-terminus, the 259-residue chain is DnaJ homolog subfamily C member 9 (259 aa).

Residues 15–82 form the J domain; the sequence is DLYQVLGVRR…EQKAVYDEQG (68 aa). Ser-109 is subject to Phosphoserine. A required for histone binding region spans residues 171–248; it reads EIPAYSAFVK…EAKYCKPSKG (78 aa).

Forms a co-chaperone complex with MCM2 and histone H3.3-H4 dimers. Within the complex, interacts (via C-terminus) with MCM2 (via N-terminus); the interaction is histone-dependent. Within the complex, interacts (via C-terminus) with histone H3.3-H4 heterodimers; the interaction is direct. Interacts with histones H4, H3.3, H3.2 and H3.1, but not with CENPA or the testis-specific histone H3.1t. Interacts (via J domain) with HSPA1A, HSPA1B and HSPA8. May interact with TONSL; the interaction seems to be histone-dependent. May interact with HSPA8 and BAG2; the interactions seem to be histone-dependent.

Its subcellular location is the nucleus. It localises to the cytoplasm. The protein localises to the cell membrane. In terms of biological role, acts as a dual histone chaperone and heat shock co-chaperone. As a histone chaperone, forms a co-chaperone complex with MCM2 and histone H3-H4 heterodimers; and may thereby assist MCM2 in histone H3-H4 heterodimer recognition and facilitate the assembly of histones into nucleosomes. May also act as a histone co-chaperone together with TONSL. May recruit histone chaperones ASF1A, NASP and SPT2 to histone H3-H4 heterodimers. Also plays a role as co-chaperone of the HSP70 family of molecular chaperone proteins, such as HSPA1A, HSPA1B and HSPA8. As a co-chaperone, may play a role in the recruitment of HSP70-type molecular chaperone machinery to histone H3-H4 substrates, thereby maintaining the histone structural integrity. Exhibits activity to assemble histones onto DNA in vitro. This is DnaJ homolog subfamily C member 9 (Dnajc9) from Mus musculus (Mouse).